The primary structure comprises 106 residues: Small ribosomal subunit protein uS10 (106 aa).

It belongs to the universal ribosomal protein uS10 family. As to quaternary structure, part of the 30S ribosomal subunit.

Its function is as follows. Involved in the binding of tRNA to the ribosomes. The sequence is that of Small ribosomal subunit protein uS10 from Wolbachia pipientis subsp. Culex pipiens (strain wPip).